The following is a 265-amino-acid chain: Histone H1 (265 aa).

The span at 1–27 (MATEEPIVAVETVPEPIVTEPTTITEP) shows a compositional bias: low complexity. 3 disordered regions span residues 1-66 (MATE…PTYE), 131-226 (AAKK…TTPG), and 242-265 (VKSV…GGRK). A compositionally biased stretch (basic and acidic residues) spans 29-42 (VPEKEEPKAEVEKT). Residues 43–55 (KKAKGSKPKKASK) are compositionally biased toward basic residues. One can recognise an H15 domain in the interval 61–130 (SHPTYEEMIK…KVKGSFKLSA (70 aa)). Residues 140-171 (PKAKTAAKAKSVKAKPAAKPKAKAVVKPKVAS) are compositionally biased toward basic residues. Residues 186–202 (KPKTVAAKTKPTAAKPK) show a composition bias toward low complexity. Basic residues predominate over residues 203-215 (AVVKPKSKVKPAK). A compositionally biased stretch (low complexity) spans 216–226 (VAKTSVKTTPG).

The protein belongs to the histone H1/H5 family.

The protein localises to the nucleus. The protein resides in the chromosome. Histones H1 are necessary for the condensation of nucleosome chains into higher-order structures. This Pisum sativum (Garden pea) protein is Histone H1.